A 465-amino-acid chain; its full sequence is Protein maelstrom (465 aa).

The HMG box DNA-binding region spans 2–69 (APKKHSGFMM…ADRGKRERLN (68 aa)). Positions 415-440 (MRKSSKHTGPSVSTQRERNAGAWNLP) are disordered.

The protein belongs to the maelstrom family.

Its subcellular location is the cytoplasm. The protein resides in the nucleus. Functionally, involved both in the piRNA and miRNA metabolic processes. As a component of the meiotic nuage, plays a central role during oogenesis by repressing transposable elements and preventing their mobilization, which is essential for the germline integrity. Repression of transposable elements is mediated via the piRNA metabolic process, which mediates the repression of transposable elements during meiosis by forming complexes composed of piRNAs and Piwi proteins and governs the repression of transposons. As a nuclear component, it is required for proper differentiation in the germline stem cell (GSC) lineage by repressing microRNA-7 (miR-7), thereby acting as an indirect regulator of bag-of-marbles (Bam). Acts by binding to the promoter of miR-7 gene and repressing its expression; miR-7 repression alleviates the Bam repression by miR-7, thereby allowing differentiation in the germline stem cell (GSC) lineage. This chain is Protein maelstrom (mael), found in Drosophila yakuba (Fruit fly).